A 243-amino-acid chain; its full sequence is UPF0246 protein M6_Spy1787 (243 aa).

It belongs to the UPF0246 family.

The chain is UPF0246 protein M6_Spy1787 from Streptococcus pyogenes serotype M6 (strain ATCC BAA-946 / MGAS10394).